A 154-amino-acid chain; its full sequence is uncharacterized protein (154 aa).

Transmembrane regions (helical) follow at residues 54–74 (FLIT…IYLL) and 81–101 (FAFV…FFLS).

Its subcellular location is the cell membrane. This is an uncharacterized protein from Mycoplasma genitalium (strain ATCC 33530 / DSM 19775 / NCTC 10195 / G37) (Mycoplasmoides genitalium).